Reading from the N-terminus, the 339-residue chain is Ketol-acid reductoisomerase (NADP(+)) (339 aa).

The region spanning 1–182 (MRVYYDRDAD…GGGRAGIIET (182 aa)) is the KARI N-terminal Rossmann domain. Residues 24 to 27 (YGSQ), Arg48, Ser51, Thr53, and 83 to 86 (DELQ) contribute to the NADP(+) site. Residue His108 is part of the active site. Gly134 lines the NADP(+) pocket. Residues 183–328 (TFKEECETDL…AKLRGMMPWI (146 aa)) enclose the KARI C-terminal knotted domain. Residues Asp191, Glu195, Glu227, and Glu231 each coordinate Mg(2+). Substrate is bound at residue Ser252.

It belongs to the ketol-acid reductoisomerase family. The cofactor is Mg(2+).

It catalyses the reaction (2R)-2,3-dihydroxy-3-methylbutanoate + NADP(+) = (2S)-2-acetolactate + NADPH + H(+). The enzyme catalyses (2R,3R)-2,3-dihydroxy-3-methylpentanoate + NADP(+) = (S)-2-ethyl-2-hydroxy-3-oxobutanoate + NADPH + H(+). It functions in the pathway amino-acid biosynthesis; L-isoleucine biosynthesis; L-isoleucine from 2-oxobutanoate: step 2/4. It participates in amino-acid biosynthesis; L-valine biosynthesis; L-valine from pyruvate: step 2/4. Involved in the biosynthesis of branched-chain amino acids (BCAA). Catalyzes an alkyl-migration followed by a ketol-acid reduction of (S)-2-acetolactate (S2AL) to yield (R)-2,3-dihydroxy-isovalerate. In the isomerase reaction, S2AL is rearranged via a Mg-dependent methyl migration to produce 3-hydroxy-3-methyl-2-ketobutyrate (HMKB). In the reductase reaction, this 2-ketoacid undergoes a metal-dependent reduction by NADPH to yield (R)-2,3-dihydroxy-isovalerate. In Methylorubrum extorquens (strain CM4 / NCIMB 13688) (Methylobacterium extorquens), this protein is Ketol-acid reductoisomerase (NADP(+)).